Reading from the N-terminus, the 315-residue chain is Glutathione synthetase (315 aa).

In terms of domain architecture, ATP-grasp spans 125–310 (KLYTAWFADL…ITGMLMDAIE (186 aa)). Position 151-207 (151-207 (WEKHGDIIMKPLDGMGGASIFRVKEGDPNIGVIAETLTELGNRYCMAQNYLPAIKDG)) interacts with ATP. Mg(2+) contacts are provided by Glu-281 and Asn-283.

This sequence belongs to the prokaryotic GSH synthase family. It depends on Mg(2+) as a cofactor. Mn(2+) serves as cofactor.

It catalyses the reaction gamma-L-glutamyl-L-cysteine + glycine + ATP = glutathione + ADP + phosphate + H(+). The protein operates within sulfur metabolism; glutathione biosynthesis; glutathione from L-cysteine and L-glutamate: step 2/2. This is Glutathione synthetase from Salmonella typhi.